The primary structure comprises 818 residues: MSSSTDDAGTTTHSLQEFKLFETQSNFYMIGWDGSGVYRVLKIDRLDPSELNISQDSTHYTKKECYELLKRIHEGNKATGGLKLVTLCYGIIGFVKFLGPYYMLLITERRHIGDLFGHSVYAVSKSEIVALHNSTVQCNFANSRDENRYKRLLCMVDLTKDFFFSYSYNVMRSYQKNVCNYETGHNLYEKMFVWNEFLTRGIRHHLRNTLWTVALVYGFFKQASLSESGKDFKITLIARRSRHNAGTRYLKRGVNRNGDVANDVETEQIVSEDVPEDHPMQISSVVQNRGSIPLFWSQETSRLNLKPDIVLSKKEPNYEATRLHFDNLVERYGNPIIILNLIKTKERRPRESILREEFVNAIDFINKDLPEENRLRFLHWDLHKHFRSKTKNVLALLCKVATCALMLTDLFYYQVTPAMTIEDSMSLSSSSDADTGDISPHTSSDDDNGDHDSLEKKSSRSKNIAYGKCDVKPPRLQSGVLRTNCIDCLDRTNVAQYAYGWAALGQQLHVLGIRDVPAIELDDPLAISLMGLYERMGDTLAHQYGGSAAHNKVFSERRGQWRAATQSQEFLRTLQRYYNNAYMDADKQDAINIFLGTFQPEQGMPAIWELRSNSLSNGRNGEMNIGKDERFLVKRCLSDGDFLHESCTPLSAMSSNHESMPQKGFSAPLQHVSHILSESSSDIPVSNDVALSRCTPSMPRKQLFGDVQKVHRFGSDQVYFGGEEDMSSVSNFVDIEWLSSENPCENALFDRSSELTRNLTAETSSTENSVNGVGQSAPTISESGSSSSKGKEPMGTKIREDFPDSFKEWVAYGEALCH.

The SAC domain maps to leucine 153–glycine 546. The segment at serine 426–serine 459 is disordered. The short motif at arginine 482–asparagine 493 is the Phosphatase catalytic core element. Residues leucine 759–isoleucine 780 are compositionally biased toward polar residues. Residues leucine 759 to glutamate 800 form a disordered region. Residues lysine 789 to glutamate 800 are compositionally biased toward basic and acidic residues.

In terms of assembly, component of the PI(3,5)P2 regulatory complex at least composed of ATG18, SAC/FIG4, FAB1 and VAC14. Mg(2+) is required as a cofactor. In terms of tissue distribution, ubiquitous with a higher level of expression in young seedlings than in other tissues.

The protein resides in the vacuole membrane. The catalysed reaction is a 1,2-diacyl-sn-glycero-3-phospho-(1D-myo-inositol-3,5-bisphosphate) + H2O = a 1,2-diacyl-sn-glycero-3-phospho-(1D-myo-inositol-3-phosphate) + phosphate. The PI(3,5)P2 regulatory complex regulates both the synthesis and turnover of phosphatidylinositol 3,5-bisphosphate (PtdIns(3,5)P2). The chain is Phosphoinositide phosphatase SAC3 (SAC3) from Arabidopsis thaliana (Mouse-ear cress).